Consider the following 232-residue polypeptide: 2,3,4,5-tetrahydropyridine-2,6-dicarboxylate N-acetyltransferase (232 aa).

The protein belongs to the transferase hexapeptide repeat family. DapH subfamily.

It catalyses the reaction (S)-2,3,4,5-tetrahydrodipicolinate + acetyl-CoA + H2O = L-2-acetamido-6-oxoheptanedioate + CoA. It participates in amino-acid biosynthesis; L-lysine biosynthesis via DAP pathway; LL-2,6-diaminopimelate from (S)-tetrahydrodipicolinate (acetylase route): step 1/3. Its function is as follows. Catalyzes the transfer of an acetyl group from acetyl-CoA to tetrahydrodipicolinate. The chain is 2,3,4,5-tetrahydropyridine-2,6-dicarboxylate N-acetyltransferase from Streptococcus thermophilus (strain CNRZ 1066).